The following is a 492-amino-acid chain: N-succinylglutamate 5-semialdehyde dehydrogenase (492 aa).

Residue Gly-220 to Gly-225 participates in NAD(+) binding. Residues Glu-243 and Cys-277 contribute to the active site.

The protein belongs to the aldehyde dehydrogenase family. AstD subfamily.

It carries out the reaction N-succinyl-L-glutamate 5-semialdehyde + NAD(+) + H2O = N-succinyl-L-glutamate + NADH + 2 H(+). The protein operates within amino-acid degradation; L-arginine degradation via AST pathway; L-glutamate and succinate from L-arginine: step 4/5. Its function is as follows. Catalyzes the NAD-dependent reduction of succinylglutamate semialdehyde into succinylglutamate. This chain is N-succinylglutamate 5-semialdehyde dehydrogenase, found in Escherichia coli (strain 55989 / EAEC).